Here is a 199-residue protein sequence, read N- to C-terminus: Imidazoleglycerol-phosphate dehydratase (199 aa).

Belongs to the imidazoleglycerol-phosphate dehydratase family.

The protein localises to the cytoplasm. It catalyses the reaction D-erythro-1-(imidazol-4-yl)glycerol 3-phosphate = 3-(imidazol-4-yl)-2-oxopropyl phosphate + H2O. Its pathway is amino-acid biosynthesis; L-histidine biosynthesis; L-histidine from 5-phospho-alpha-D-ribose 1-diphosphate: step 6/9. This Rhodospirillum rubrum (strain ATCC 11170 / ATH 1.1.1 / DSM 467 / LMG 4362 / NCIMB 8255 / S1) protein is Imidazoleglycerol-phosphate dehydratase.